Consider the following 447-residue polypeptide: MGEDTDTRKINHSFLRDHSYVTEADIISTVEFNHTGELLATGDKGGRVVIFQREPESKNAPHSQGEYDVYSTFQSHEPEFDYLKSLEIEEKINKIKWLPQQNAAHSLLSTNDKTIKLWKITERDKRPEGYNLKDEEGKLKDLSTVTSLQVPVLKPMDLMVEVSPRRIFANGHTYHINSISVNSDCETYMSADDLRINLWHLAITDRSFNIVDIKPANMEDLTEVITASEFHPHHCNLFVYSSSKGSLRLCDMRAAALCDKHSKLFEEPEDPSNRSFFSEIISSVSDVKFSHSGRYMLTRDYLTVKVWDLNMEARPIETYQVHDYLRSKLCSLYENDCIFDKFECAWNGSDSVIMTGAYNNFFRMFDRNTKRDVTLEASRESSKPRAVLKPRRVCVGGKRRRDDISVDSLDFTKKILHTAWHPAENIIAIAATNNLYIFQDKVNSDMH.

WD repeat units follow at residues 22–61, 87–128, 171–209, 220–260, 279–317, 334–375, and 410–446; these read TEAD…KNAP, EIEE…KRPE, GHTY…RSFN, DLTE…LCDK, EIIS…RPIE, ENDC…DVTL, and DFTK…NSDM.

Belongs to the phosphatase 2A regulatory subunit B family. In terms of assembly, PP2A consists of a common heterodimeric core enzyme, composed of a 36 kDa catalytic subunit (subunit C) and a 65 kDa constant regulatory subunit (PR65 or subunit A), that associates with a variety of regulatory subunits. Proteins that associate with the core dimer include three families of regulatory subunits B (the R2/B/PR55/B55, R3/B''/PR72/PR130/PR59 and R5/B'/B56 families), the 48 kDa variable regulatory subunit, viral proteins, and cell signaling molecules. Interacts with IER5.

The B regulatory subunit might modulate substrate selectivity and catalytic activity, and might also direct the localization of the catalytic enzyme to a particular subcellular compartment. The polypeptide is Serine/threonine-protein phosphatase 2A 55 kDa regulatory subunit B gamma isoform (PPP2R2C) (Homo sapiens (Human)).